The primary structure comprises 260 residues: Intermembrane phospholipid transport system permease protein MlaE (260 aa).

Residues 1-50 are Cytoplasmic-facing; sequence MLLNALASLGHKGIKTLRTFGRAGLMLFNALVGKPEFRKHAPLLVRQLYN. The chain crosses the membrane as a helical span at residues 51–71; it reads VGVLSMLIIVVSGVFIGMVLG. Over 72 to 88 the chain is Periplasmic; that stretch reads LQGYLVLTTYSAETSLG. The helical transmembrane segment at 89 to 109 threads the bilayer; that stretch reads MLVALSLLRELGPVVAALLFA. Residues 110-147 lie on the Cytoplasmic side of the membrane; it reads GRAGSALTAEIGLMRATEQLSSMEMMAVDPLRRVISPR. The chain crosses the membrane as a helical span at residues 148 to 168; the sequence is FWAGVISLPLLTVIFVAVGIW. Over 169 to 198 the chain is Periplasmic; the sequence is GGSLVGVSWKGIDSGFFWSAMQNAVDWRMD. A helical membrane pass occupies residues 199–219; it reads LVNCLIKSVVFAITVTWISLF. Over 220 to 238 the chain is Cytoplasmic; sequence NGYDAIPTSAGISRATTRT. The chain crosses the membrane as a helical span at residues 239–259; sequence VVHSSLAVLGLDFVLTALMFG. Residue Asn260 is a topological domain, periplasmic.

The protein belongs to the MlaE permease family. The complex is composed of two ATP-binding proteins (MlaF), two transmembrane proteins (MlaE), two cytoplasmic solute-binding proteins (MlaB) and six periplasmic solute-binding proteins (MlaD).

It localises to the cell inner membrane. Functionally, part of the ABC transporter complex MlaFEDB, which is involved in a phospholipid transport pathway that maintains lipid asymmetry in the outer membrane by retrograde trafficking of phospholipids from the outer membrane to the inner membrane. Probably responsible for the translocation of the substrate across the membrane. This is Intermembrane phospholipid transport system permease protein MlaE from Escherichia coli O157:H7.